The primary structure comprises 529 residues: Variant surface glycoprotein MITAT 1.6 (529 aa).

An N-terminal signal peptide occupies residues 1–24 (MAVHRALAAYAISLYVLLPRKSGA). Intrachain disulfides connect cysteine 39-cysteine 170 and cysteine 147-cysteine 214. Asparagine 456 carries an N-linked (GlcNAc...) (high mannose) asparagine glycan. Residue aspartate 506 is the site of GPI-anchor amidated aspartate attachment. Positions 507–529 (SSILVTKKFALTVVSAAFVALLF) are cleaved as a propeptide — removed in mature form.

Post-translationally, N-glycosylated; glycan is composed of 6 to 9 mannose residues.

It is found in the cell membrane. VSG forms a coat on the surface of the parasite. The trypanosome evades the immune response of the host by expressing a series of antigenically distinct VSGs from an estimated 1000 VSG genes. This Trypanosoma brucei brucei protein is Variant surface glycoprotein MITAT 1.6.